The sequence spans 363 residues: uncharacterized protein (363 aa).

A disordered region spans residues 35–262 (TVPGPPGAES…GLSPCCGDGG (228 aa)). Over residues 56–75 (AVSSSRNPNSAGRTPNSYLT) the composition is skewed to polar residues. The segment covering 100 to 116 (GADPALGSLPAAGLSGL) has biased composition (low complexity).

This is an uncharacterized protein from Homo sapiens (Human).